We begin with the raw amino-acid sequence, 429 residues long: Trigger factor (429 aa).

A PPIase FKBP-type domain is found at 164–249; that stretch reads GDTAVIDFEG…VKEVKTKVLP (86 aa).

Belongs to the FKBP-type PPIase family. Tig subfamily.

It is found in the cytoplasm. It carries out the reaction [protein]-peptidylproline (omega=180) = [protein]-peptidylproline (omega=0). Its function is as follows. Involved in protein export. Acts as a chaperone by maintaining the newly synthesized protein in an open conformation. Functions as a peptidyl-prolyl cis-trans isomerase. The sequence is that of Trigger factor from Lysinibacillus sphaericus (strain C3-41).